An 855-amino-acid chain; its full sequence is Photoactivated adenylate cyclase subunit beta-like protein 1224-5/9F (855 aa).

Residues 56–149 (LRRLMYLSKG…GRMSGVWHMK (94 aa)) enclose the BLUF 1 domain. Residues 420–444 (RPPIFDDTPKCNPRPRTPGCEGRQR) form a disordered region. Residues 471–563 (VPTLTYISHA…RVYPSEWTLT (93 aa)) form the BLUF 2 domain. The span at 813–827 (RSGEKPLTEPEEAKL) shows a compositional bias: basic and acidic residues. The interval 813-855 (RSGEKPLTEPEEAKLDFSPGRVRHGDSGRRSNSAQGKLSIQVR) is disordered. Polar residues predominate over residues 842 to 855 (RSNSAQGKLSIQVR).

In terms of assembly, heterotetramer of two alpha and two beta subunits.

It localises to the cell projection. It is found in the cilium. Its subcellular location is the flagellum. In Euglena gracilis, this protein is Photoactivated adenylate cyclase subunit beta-like protein 1224-5/9F.